The sequence spans 278 residues: E3 ubiquitin-protein ligase MARCHF5 (278 aa).

Residues 6–75 form an RING-CH-type zinc finger; sequence LQQMLDRSCW…PQCNAEYLIV (70 aa). Residues cysteine 14, cysteine 17, cysteine 33, cysteine 35, histidine 43, cysteine 46, cysteine 65, and cysteine 68 each contribute to the Zn(2+) site. 4 helical membrane passes run 99-119, 139-159, 209-229, and 238-258; these read FAAAGIMVGSIYWTAVTYGAV, PLFLLIGLPTIPVMLILGKMI, ILCGALVFPTIATIVGKLMFS, and TILGGIAFVAIKGAFKVYFKQ.

Monomer and homodimer. Interacts with MFN1, MFN2, DNM1L and FIS1. Autoubiquitinated leading to degradation (short half-life).

It is found in the mitochondrion outer membrane. It carries out the reaction S-ubiquitinyl-[E2 ubiquitin-conjugating enzyme]-L-cysteine + [acceptor protein]-L-lysine = [E2 ubiquitin-conjugating enzyme]-L-cysteine + N(6)-ubiquitinyl-[acceptor protein]-L-lysine.. It functions in the pathway protein modification; protein ubiquitination. In terms of biological role, mitochondrial E3 ubiquitin-protein ligase that plays a crucial role in the control of mitochondrial morphology by acting as a positive regulator of mitochondrial fission and as an important regulator of immune response. Plays a crucial role in maintaining mitochondrial homeostasis by regulating the dynamics of mitochondria through the ubiquitination of key proteins involved in fission and fusion such as FIS1, DNM1L and MFN1. Acts as a critical determinant of mitotic apoptosis through both MCL1-dependent and -independent pathways. Turns off persistent immune signaling by degrading oligomeric complexes of retinoic acid-inducible gene I/DDX58 and mitochondrial antiviral-signaling protein/MAVS formed upon RNA virus infection. Promotes STING-mediated type-I interferon production via 'Lys-63'-linked ubiquitination of STING1 thereby preserving its activity and preventing the formation of inactive STING1 polymers. Plays also an essential role in the formation of PEX3-containing vesicles in the de novo biogenesis of peroxisomes from mitochondria. Acts as a regulator of NLRP3 inflammasome activation on the mitochondria by mediating the 'Lys-27'-linked polyubiquitination of NLRP3, positively regulating the NLRP3-NEK7 complex formation and NLRP3 oligomerization. The protein is E3 ubiquitin-protein ligase MARCHF5 (MARCHF5) of Bos taurus (Bovine).